A 320-amino-acid chain; its full sequence is Solute carrier family 35 member B1 (320 aa).

Transmembrane regions (helical) follow at residues 9–29 (GLRL…YGIL), 49–69 (FALS…KLLI), 81–103 (QSWL…NSAL), 134–154 (YPLT…LFMY), 166–186 (TVGY…LTGV), 202–222 (MMLS…VLTG), 241–261 (IVLF…TVVY), and 283–303 (VILF…LVFL). The short motif at 316–320 (KKPSH) is the Di-lysine motif element.

The protein belongs to the nucleotide-sugar transporter family. SLC35B subfamily.

It is found in the endoplasmic reticulum membrane. Functionally, probable sugar transporter. The sequence is that of Solute carrier family 35 member B1 (slc35b1) from Xenopus laevis (African clawed frog).